We begin with the raw amino-acid sequence, 260 residues long: Kallikrein-8 (260 aa).

Residues 1–28 (MGRPPPCAIQPWILLLLFMGAWAGLTRA) form the signal peptide. Residues 29 to 32 (QGSK) constitute a propeptide that is removed on maturation. Residues 33-257 (ILEGRECIPH…YTTWIKKTMD (225 aa)) form the Peptidase S1 domain. Intrachain disulfides connect cysteine 39-cysteine 173, cysteine 58-cysteine 74, cysteine 145-cysteine 246, cysteine 152-cysteine 218, cysteine 184-cysteine 198, and cysteine 208-cysteine 233. Residue histidine 73 is the Charge relay system of the active site. The N-linked (GlcNAc...) asparagine glycan is linked to asparagine 110. Residue aspartate 120 is the Charge relay system of the active site. Serine 212 (charge relay system) is an active-site residue.

This sequence belongs to the peptidase S1 family. Kallikrein subfamily. In terms of assembly, interacts with SPINK9. In terms of tissue distribution, expressed in the limbic system of mouse brain and is localized at highest concentration in pyramidal neurons of the hippocampal CA1-3 subfields. Also detected in spinal cord gray matter and in keratinized stratified epithelia of epidermis, hair, tongue, palate, nasal cavity, pharynges, esophagus and forestomach. In skin and mucus membranes, expressed in stratum spinosum and stratum granulosum. Expressed during estrus in vaginal epithelial cells but not stromal cells. Within the vaginal epithelium, expressed in prickle cells, granular cells and parakeratotic cells but not in basal cells. Not expressed in uterus. Expressed in the keratinocytes.

Its subcellular location is the secreted. The protein resides in the cytoplasm. The enzyme catalyses Cleavage of amide substrates following the basic amino acids Arg or Lys at the P1 position, with a preference for Arg over Lys.. With respect to regulation, strongly inhibited by diisopropyl fluorophosphate, leupeptin and (4-amidinophenyl)methanesulfonyl 1-fluoride. Serine protease which is capable of degrading a number of proteins such as casein, fibrinogen, kininogen, fibronectin and collagen type IV. Also cleaves L1CAM in response to increased neural activity. Induces neurite outgrowth and fasciculation of cultured hippocampal neurons. Plays a role in the formation and maturation of orphan and small synaptic boutons in the Schaffer-collateral pathway, regulates Schaffer-collateral long-term potentiation in the hippocampus and is required for memory acquisition and synaptic plasticity. Involved in skin desquamation and keratinocyte proliferation. Plays a role in the secondary phase of pathogenesis following spinal cord injury. This chain is Kallikrein-8 (Klk8), found in Mus musculus (Mouse).